We begin with the raw amino-acid sequence, 164 residues long: UPF0304 protein ESA_00925 (164 aa).

Belongs to the UPF0304 family.

The chain is UPF0304 protein ESA_00925 from Cronobacter sakazakii (strain ATCC BAA-894) (Enterobacter sakazakii).